The primary structure comprises 358 residues: Uroporphyrinogen decarboxylase (358 aa).

Substrate-binding positions include 29 to 33, aspartate 79, tyrosine 155, serine 210, and histidine 330; that span reads RQAGR.

The protein belongs to the uroporphyrinogen decarboxylase family. Homodimer.

It localises to the cytoplasm. It carries out the reaction uroporphyrinogen III + 4 H(+) = coproporphyrinogen III + 4 CO2. The protein operates within porphyrin-containing compound metabolism; protoporphyrin-IX biosynthesis; coproporphyrinogen-III from 5-aminolevulinate: step 4/4. Functionally, catalyzes the decarboxylation of four acetate groups of uroporphyrinogen-III to yield coproporphyrinogen-III. This Bordetella petrii (strain ATCC BAA-461 / DSM 12804 / CCUG 43448) protein is Uroporphyrinogen decarboxylase.